We begin with the raw amino-acid sequence, 310 residues long: D-alanyl-D-alanine endopeptidase (310 aa).

Residues 1–25 (MPKFRVSLFSLALMLAVPFAPQAVA) form the signal peptide. Serine 67 (acyl-ester intermediate) is an active-site residue. The active-site Proton acceptor is the lysine 70. Residue serine 124 is part of the active site. Lysine 231 is a substrate binding site.

This sequence belongs to the peptidase S11 family. Pbp8 is a proteolytic product of Pbp7.

The protein localises to the periplasm. Cell wall formation. May play a specialized role in remodeling the cell wall. Specifically hydrolyzes the DD-diaminopimelate-alanine bonds in high-molecular-mass murein sacculi. The sequence is that of D-alanyl-D-alanine endopeptidase (pbpG) from Escherichia coli (strain K12).